A 770-amino-acid polypeptide reads, in one-letter code: Probable zinc transporter protein DDB_G0291141 (770 aa).

At 1–36 (MAGSLDDSIYNNGRSGGGGGGFKFSKGFNKDSISKR) the chain is on the cytoplasmic side. A helical transmembrane segment spans residues 37–57 (IIMMLFFSKGIRAWSCIILLY). Residues 58–62 (FLQSS) lie on the Extracellular side of the membrane. A helical transmembrane segment spans residues 63–83 (ISIISASFYMCLFSAIFSVVV). The Cytoplasmic portion of the chain corresponds to 84–100 (EKPWNLLSSLRPSQIKK). A helical transmembrane segment spans residues 101 to 117 (IIYHSIFNLLIIITWNS). The Extracellular portion of the chain corresponds to 118-123 (SIKFIG). A helical membrane pass occupies residues 124 to 146 (PIGSILASDYTFSTYPLIFNSLL). Residues 147-154 (QGNFLATD) are Cytoplasmic-facing. A helical membrane pass occupies residues 155-175 (MSRGSIMLMIGYFLIPLFGIS). At 176 to 184 (NRLDILGYT) the chain is on the extracellular side. A helical membrane pass occupies residues 185–205 (SSQVFMIGLFSLIVHNVLVLW). The Cytoplasmic segment spans residues 206-224 (KKTIVRSWNSGSSGGKNKL). The chain crosses the membrane as a helical span at residues 225-245 (SSLGSCVSTIILFVFKLFEGF). The Extracellular segment spans residues 246-262 (SSGSSGSDSINQVSYSQ). A helical transmembrane segment spans residues 263-283 (LFVIAIITFILYSLNQFIDDV). Residues 284–291 (SEKELTFN) are Cytoplasmic-facing. Residues 292–312 (VLSKVSLTSSVIFGLLAALFI) form a helical membrane-spanning segment. Residues 313–316 (GFKD) are Extracellular-facing. The chain crosses the membrane as a helical span at residues 317 to 337 (FFHPILILSFIFIINAIHILY). At 338–404 (SKSNDIQPMT…QIVDKPTSRR (67 aa)) the chain is on the cytoplasmic side. Residues 405 to 425 (IFTFLVINLMFMFVEMAYGIW) form a helical membrane-spanning segment. Residues 426-434 (TNSLGLITD) are Extracellular-facing. A helical membrane pass occupies residues 435-455 (ACHMFFDATALFIALVAEVIS). The Cytoplasmic segment spans residues 456 to 469 (QWKQNDKYSYGYGR). Residues 470-490 (FQVLSGFVNGIFLIFIAVTIL) form a helical membrane-spanning segment. At 491–507 (MESVERLLEPPEINTDK) the chain is on the extracellular side. A helical membrane pass occupies residues 508-528 (LLLVSVLGFIINLIGIFSFHG). Topologically, residues 529-592 (DHGHSHGGGG…GVFLHLLADT (64 aa)) are cytoplasmic. The disordered stretch occupies residues 532–566 (HSHGGGGGHSHGGGEKKEKHHGHSHGGHGDHQQVT). The helical transmembrane segment at 593 to 613 (LGSVGVIVSSLIIQIWGYTLA) threads the bilayer. Position 614 (aspartate 614) is a topological domain, extracellular. A helical membrane pass occupies residues 615–635 (PICSLLISILIFLSVLPLIAN). Residues 636-770 (TAKTLLQCTP…SSSSHHHRHN (135 aa)) are Cytoplasmic-facing. The tract at residues 751–770 (DIHHNHSSSSSSSSHHHRHN) is disordered.

This sequence belongs to the cation diffusion facilitator (CDF) transporter (TC 2.A.4) family. SLC30A subfamily.

The protein localises to the membrane. May be involved in zinc transport from the cytoplasm to either intracellular organelles or extracellular spaces. The chain is Probable zinc transporter protein DDB_G0291141 from Dictyostelium discoideum (Social amoeba).